The primary structure comprises 399 residues: Endo-1,4-beta-xylanase C (399 aa).

The N-terminal stretch at 1–20 (MFKFSASLAALAALVPFVAA) is a signal peptide. Positions 21–56 (QSPEWGQCGGIGWTGPTTCVAGTTCVESNPYYSQCL) constitute a CBM1 domain. One can recognise a GH10 domain in the interval 81-396 (SAKLHTLAKA…KPAFNGIAAG (316 aa)). Catalysis depends on glutamate 212, which acts as the Proton donor. Glutamate 318 serves as the catalytic Nucleophile. Cysteines 346 and 352 form a disulfide.

Belongs to the glycosyl hydrolase 10 (cellulase F) family.

The protein resides in the secreted. The catalysed reaction is Endohydrolysis of (1-&gt;4)-beta-D-xylosidic linkages in xylans.. The protein operates within glycan degradation; xylan degradation. Functionally, endo-1,4-beta-xylanase involved in the hydrolysis of xylan, a major structural heterogeneous polysaccharide found in plant biomass representing the second most abundant polysaccharide in the biosphere, after cellulose. In Phanerodontia chrysosporium (White-rot fungus), this protein is Endo-1,4-beta-xylanase C (xynC).